The chain runs to 340 residues: S-adenosylmethionine:tRNA ribosyltransferase-isomerase (340 aa).

The protein belongs to the QueA family. In terms of assembly, monomer.

Its subcellular location is the cytoplasm. It carries out the reaction 7-aminomethyl-7-carbaguanosine(34) in tRNA + S-adenosyl-L-methionine = epoxyqueuosine(34) in tRNA + adenine + L-methionine + 2 H(+). Its pathway is tRNA modification; tRNA-queuosine biosynthesis. Functionally, transfers and isomerizes the ribose moiety from AdoMet to the 7-aminomethyl group of 7-deazaguanine (preQ1-tRNA) to give epoxyqueuosine (oQ-tRNA). This chain is S-adenosylmethionine:tRNA ribosyltransferase-isomerase, found in Nitratiruptor sp. (strain SB155-2).